The sequence spans 384 residues: tRNA-specific 2-thiouridylase MnmA (384 aa).

Residues 9-16 and Met35 contribute to the ATP site; that span reads GMSGGVDS. An interaction with target base in tRNA region spans residues 95 to 97; the sequence is NPD. The active-site Nucleophile is Cys100. Cys100 and Cys196 are disulfide-bonded. Gly124 contacts ATP. An interaction with tRNA region spans residues 146-148; it reads KDQ. The Cysteine persulfide intermediate role is filled by Cys196. The segment at 308-309 is interaction with tRNA; the sequence is RY.

The protein belongs to the MnmA/TRMU family.

The protein resides in the cytoplasm. The enzyme catalyses S-sulfanyl-L-cysteinyl-[protein] + uridine(34) in tRNA + AH2 + ATP = 2-thiouridine(34) in tRNA + L-cysteinyl-[protein] + A + AMP + diphosphate + H(+). In terms of biological role, catalyzes the 2-thiolation of uridine at the wobble position (U34) of tRNA, leading to the formation of s(2)U34. This chain is tRNA-specific 2-thiouridylase MnmA, found in Burkholderia vietnamiensis (strain G4 / LMG 22486) (Burkholderia cepacia (strain R1808)).